A 389-amino-acid chain; its full sequence is Chalcone synthase H2 (389 aa).

Residue C164 is part of the active site.

It belongs to the thiolase-like superfamily. Chalcone/stilbene synthases family.

Its subcellular location is the cytoplasm. It catalyses the reaction (E)-4-coumaroyl-CoA + 3 malonyl-CoA + 3 H(+) = 2',4,4',6'-tetrahydroxychalcone + 3 CO2 + 4 CoA. The protein operates within secondary metabolite biosynthesis; flavonoid biosynthesis. Functionally, involved in the biosynthesis of prenylated phenolics natural products which contribute to the bitter taste of beer and display broad biological activities. Chalcone synthase that can use 4-coumaroyl-CoA to produce 4,2',4',6'-tetrahydroxychalcone (also termed naringenin-chalcone or chalcone) which can, under specific conditions, spontaneously isomerize into naringenin. In Humulus lupulus (European hop), this protein is Chalcone synthase H2.